Reading from the N-terminus, the 512-residue chain is Glutathione-binding protein GsiB (512 aa).

The signal sequence occupies residues 1–26 (MTQFITHKWLAALGLASSIAAFPALA).

The protein belongs to the bacterial solute-binding protein 5 family. As to quaternary structure, the complex is composed of two ATP-binding proteins (GsiA), two transmembrane proteins (GsiC and GsiD) and a solute-binding protein (GsiB).

The protein localises to the periplasm. Part of the ABC transporter complex GsiABCD involved in glutathione import. Binds glutathione. In Salmonella typhimurium (strain LT2 / SGSC1412 / ATCC 700720), this protein is Glutathione-binding protein GsiB.